Here is a 555-residue protein sequence, read N- to C-terminus: Protein PLASTID TRANSCRIPTIONALLY ACTIVE 12, chloroplastic (555 aa).

The N-terminal 58 residues, 1–58 (MASCYNPWRLFPGMSTAVPAGPVTAPAHSRTCKSSKVFSALPHRRGLLFLGTRRARIK), are a transit peptide targeting the chloroplast. 3 disordered regions span residues 80–100 (YFDS…SIPG), 115–167 (ARAP…EPDV), and 468–541 (SYNE…IDDS). Polar residues predominate over residues 144 to 154 (QVTSASGTEGA). Composition is skewed to acidic residues over residues 471–480 (EDSDDEDEDV) and 490–502 (LEDE…DVAE). Residues 508–519 (NQNWSALKSTGQ) show a composition bias toward polar residues. The span at 521–538 (EKPKEKSKKDEMTLKEAI) shows a compositional bias: basic and acidic residues.

In terms of assembly, component of the plastid-encoded plastid RNA polymerase (PEP) complex.

It is found in the plastid. The protein resides in the chloroplast stroma. Its subcellular location is the nucleus. Required for the activity of the plastid-encoded RNA polymerase (PEP) and full expression of genes transcribed by PEP. Required for the proper build-up and formation of the PEP-complex. Binds single-stranded (ss) DNA and RNA, but not double-stranded (ds) DNA. This Zea mays (Maize) protein is Protein PLASTID TRANSCRIPTIONALLY ACTIVE 12, chloroplastic.